We begin with the raw amino-acid sequence, 363 residues long: UDP-N-acetylglucosamine--N-acetylmuramyl-(pentapeptide) pyrophosphoryl-undecaprenol N-acetylglucosamine transferase (363 aa).

UDP-N-acetyl-alpha-D-glucosamine contacts are provided by residues 12–14, R166, S196, and Q291; that span reads TAG.

The protein belongs to the glycosyltransferase 28 family. MurG subfamily.

Its subcellular location is the cell inner membrane. It carries out the reaction di-trans,octa-cis-undecaprenyl diphospho-N-acetyl-alpha-D-muramoyl-L-alanyl-D-glutamyl-meso-2,6-diaminopimeloyl-D-alanyl-D-alanine + UDP-N-acetyl-alpha-D-glucosamine = di-trans,octa-cis-undecaprenyl diphospho-[N-acetyl-alpha-D-glucosaminyl-(1-&gt;4)]-N-acetyl-alpha-D-muramoyl-L-alanyl-D-glutamyl-meso-2,6-diaminopimeloyl-D-alanyl-D-alanine + UDP + H(+). Its pathway is cell wall biogenesis; peptidoglycan biosynthesis. Its function is as follows. Cell wall formation. Catalyzes the transfer of a GlcNAc subunit on undecaprenyl-pyrophosphoryl-MurNAc-pentapeptide (lipid intermediate I) to form undecaprenyl-pyrophosphoryl-MurNAc-(pentapeptide)GlcNAc (lipid intermediate II). This chain is UDP-N-acetylglucosamine--N-acetylmuramyl-(pentapeptide) pyrophosphoryl-undecaprenol N-acetylglucosamine transferase, found in Legionella pneumophila (strain Paris).